The sequence spans 194 residues: Peptidyl-tRNA hydrolase (194 aa).

Y16 provides a ligand contact to tRNA. H21 acts as the Proton acceptor in catalysis. Residues F67, N69, and N115 each coordinate tRNA.

The protein belongs to the PTH family. In terms of assembly, monomer.

Its subcellular location is the cytoplasm. The enzyme catalyses an N-acyl-L-alpha-aminoacyl-tRNA + H2O = an N-acyl-L-amino acid + a tRNA + H(+). Its function is as follows. Hydrolyzes ribosome-free peptidyl-tRNAs (with 1 or more amino acids incorporated), which drop off the ribosome during protein synthesis, or as a result of ribosome stalling. In terms of biological role, catalyzes the release of premature peptidyl moieties from peptidyl-tRNA molecules trapped in stalled 50S ribosomal subunits, and thus maintains levels of free tRNAs and 50S ribosomes. This is Peptidyl-tRNA hydrolase from Escherichia coli O17:K52:H18 (strain UMN026 / ExPEC).